We begin with the raw amino-acid sequence, 699 residues long: Endogenous retrovirus group K member 8 Env polyprotein (699 aa).

A disordered region spans residues 1–47 (MNPSEMQRKAPPRRRRHRNRAPLTHKMNKMVTSEEQMKLPSTKKAEP). The signal sequence occupies residues 1 to 89 (MNPSEMQRKA…ALMIVSMVVS (89 aa)). The segment covering 10-20 (APPRRRRHRNR) has biased composition (basic residues). The Extracellular segment spans residues 90–632 (LPMPAGAAVA…NLNPVTWVKT (543 aa)). N-linked (GlcNAc...) asparagine glycosylation is found at Asn-100, Asn-128, Asn-153, Asn-274, Asn-355, Asn-372, and Asn-461. Residues 466–486 (FIFTLIAVIMGLIAVTATAAV) form a fusion peptide region. N-linked (GlcNAc...) asparagine glycosylation is found at Asn-507, Asn-554, Asn-566, and Asn-585. The helical transmembrane segment at 633–653 (IGSTTIINLILILVCLFCLLL) threads the bilayer. Topologically, residues 654 to 699 (VCRCTQQLRRDSDHRERAMMTMAVLSKRKGGNVGKSKRDQIVTVSV) are cytoplasmic.

This sequence belongs to the beta type-B retroviral envelope protein family. HERV class-II K(HML-2) env subfamily. In terms of assembly, the surface (SU) and transmembrane (TM) proteins form a heterodimer. SU and TM are attached by noncovalent interactions or by a labile interchain disulfide bond. In terms of processing, specific enzymatic cleavages in vivo yield the mature SU and TM proteins.

It is found in the cell membrane. The protein localises to the virion. In terms of biological role, retroviral envelope proteins mediate receptor recognition and membrane fusion during early infection. Endogenous envelope proteins may have kept, lost or modified their original function during evolution. This endogenous envelope protein has lost its original fusogenic properties. Functionally, SU mediates receptor recognition. Its function is as follows. TM anchors the envelope heterodimer to the viral membrane through one transmembrane domain. The other hydrophobic domain, called fusion peptide, mediates fusion of the viral membrane with the target cell membrane. The protein is Endogenous retrovirus group K member 8 Env polyprotein (ERVK-8) of Homo sapiens (Human).